Reading from the N-terminus, the 372-residue chain is Queuine tRNA-ribosyltransferase (372 aa).

Catalysis depends on D92, which acts as the Proton acceptor. Residues 92–96 (DSGGY), D146, Q188, and G215 each bind substrate. Residues 246–252 (GIGSLKE) are RNA binding. The active-site Nucleophile is the D265. Residues 270 to 274 (TRLGR) are RNA binding; important for wobble base 34 recognition. Residues C303, C305, C308, and H334 each contribute to the Zn(2+) site.

Belongs to the queuine tRNA-ribosyltransferase family. As to quaternary structure, homodimer. Within each dimer, one monomer is responsible for RNA recognition and catalysis, while the other monomer binds to the replacement base PreQ1. It depends on Zn(2+) as a cofactor.

It carries out the reaction 7-aminomethyl-7-carbaguanine + guanosine(34) in tRNA = 7-aminomethyl-7-carbaguanosine(34) in tRNA + guanine. Its pathway is tRNA modification; tRNA-queuosine biosynthesis. Its function is as follows. Catalyzes the base-exchange of a guanine (G) residue with the queuine precursor 7-aminomethyl-7-deazaguanine (PreQ1) at position 34 (anticodon wobble position) in tRNAs with GU(N) anticodons (tRNA-Asp, -Asn, -His and -Tyr). Catalysis occurs through a double-displacement mechanism. The nucleophile active site attacks the C1' of nucleotide 34 to detach the guanine base from the RNA, forming a covalent enzyme-RNA intermediate. The proton acceptor active site deprotonates the incoming PreQ1, allowing a nucleophilic attack on the C1' of the ribose to form the product. After dissociation, two additional enzymatic reactions on the tRNA convert PreQ1 to queuine (Q), resulting in the hypermodified nucleoside queuosine (7-(((4,5-cis-dihydroxy-2-cyclopenten-1-yl)amino)methyl)-7-deazaguanosine). The protein is Queuine tRNA-ribosyltransferase of Prochlorococcus marinus (strain MIT 9515).